The following is a 781-amino-acid chain: Penicillin-binding protein 1B (781 aa).

Positions 151–322 are transglycosylase; the sequence is FRLAPKLIAM…SLYNPWRNPQ (172 aa). Glutamate 188 acts as the Proton donor; for transglycosylase activity in catalysis. The tract at residues 415–702 is transpeptidase; that stretch reads SQLQLKMKNP…ALQIYKDYLN (288 aa). Catalysis depends on serine 466, which acts as the Acyl-ester intermediate; for transpeptidase activity. Low complexity predominate over residues 749 to 768; it reads ETSSPSLTPTTETETPPQES. The interval 749–781 is disordered; it reads ETSSPSLTPTTETETPPQESLWDVLDNPNPPAQ.

It in the N-terminal section; belongs to the glycosyltransferase 51 family. In the C-terminal section; belongs to the transpeptidase family.

Its subcellular location is the cell inner membrane. It carries out the reaction [GlcNAc-(1-&gt;4)-Mur2Ac(oyl-L-Ala-gamma-D-Glu-L-Lys-D-Ala-D-Ala)](n)-di-trans,octa-cis-undecaprenyl diphosphate + beta-D-GlcNAc-(1-&gt;4)-Mur2Ac(oyl-L-Ala-gamma-D-Glu-L-Lys-D-Ala-D-Ala)-di-trans,octa-cis-undecaprenyl diphosphate = [GlcNAc-(1-&gt;4)-Mur2Ac(oyl-L-Ala-gamma-D-Glu-L-Lys-D-Ala-D-Ala)](n+1)-di-trans,octa-cis-undecaprenyl diphosphate + di-trans,octa-cis-undecaprenyl diphosphate + H(+). The catalysed reaction is Preferential cleavage: (Ac)2-L-Lys-D-Ala-|-D-Ala. Also transpeptidation of peptidyl-alanyl moieties that are N-acyl substituents of D-alanine.. It functions in the pathway cell wall biogenesis; peptidoglycan biosynthesis. Its function is as follows. Cell wall formation. Synthesis of cross-linked peptidoglycan from the lipid intermediates. The enzyme has a penicillin-insensitive transglycosylase N-terminal domain (formation of linear glycan strands) and a penicillin-sensitive transpeptidase C-terminal domain (cross-linking of the peptide subunits). This chain is Penicillin-binding protein 1B (mrcB), found in Haemophilus influenzae (strain ATCC 51907 / DSM 11121 / KW20 / Rd).